The sequence spans 497 residues: Membrane-bound lytic murein transglycosylase F (497 aa).

The first 29 residues, 1–29 (MFFRPDFRPRCAKWLIATGLFLMLGACVE), serve as a signal peptide directing secretion. The tract at residues 30–267 (KPTTLERVKE…RLKDRYYGHV (238 aa)) is non-LT domain. The LT domain stretch occupies residues 268–497 (DVLGYVGAYT…PASSPEKPAL (230 aa)). Glu-314 is a catalytic residue. Residues 464-497 (VADGNLHVPGVDKTQPPAPTAPVVPASSPEKPAL) are disordered. The segment covering 486–497 (VVPASSPEKPAL) has biased composition (low complexity).

The protein in the N-terminal section; belongs to the bacterial solute-binding protein 3 family. It in the C-terminal section; belongs to the transglycosylase Slt family.

The protein localises to the cell outer membrane. The enzyme catalyses Exolytic cleavage of the (1-&gt;4)-beta-glycosidic linkage between N-acetylmuramic acid (MurNAc) and N-acetylglucosamine (GlcNAc) residues in peptidoglycan, from either the reducing or the non-reducing ends of the peptidoglycan chains, with concomitant formation of a 1,6-anhydrobond in the MurNAc residue.. Murein-degrading enzyme that degrades murein glycan strands and insoluble, high-molecular weight murein sacculi, with the concomitant formation of a 1,6-anhydromuramoyl product. Lytic transglycosylases (LTs) play an integral role in the metabolism of the peptidoglycan (PG) sacculus. Their lytic action creates space within the PG sacculus to allow for its expansion as well as for the insertion of various structures such as secretion systems and flagella. The polypeptide is Membrane-bound lytic murein transglycosylase F (Pseudomonas syringae pv. tomato (strain ATCC BAA-871 / DC3000)).